The primary structure comprises 230 residues: Heptaprenylglyceryl phosphate synthase (230 aa).

Lys12 serves as a coordination point for sn-glycerol 1-phosphate. Mg(2+) contacts are provided by Asp14 and Thr40. Residues 159-164 (YVEYSG), Gly189, and 209-210 (GD) each bind sn-glycerol 1-phosphate.

This sequence belongs to the GGGP/HepGP synthase family. Group I subfamily. As to quaternary structure, homodimer. Mg(2+) is required as a cofactor.

The catalysed reaction is sn-glycerol 1-phosphate + all-trans-heptaprenyl diphosphate = 3-heptaprenyl-sn-glycero-1-phosphate + diphosphate. Its pathway is membrane lipid metabolism; glycerophospholipid metabolism. Its function is as follows. Prenyltransferase that catalyzes in vivo the transfer of the heptaprenyl moiety of heptaprenyl pyrophosphate (HepPP; 35 carbon atoms) to the C3 hydroxyl of sn-glycerol-1-phosphate (G1P), producing heptaprenylglyceryl phosphate (HepGP). This reaction is an ether-bond-formation step in the biosynthesis of archaea-type G1P-based membrane lipids found in Bacillales. The chain is Heptaprenylglyceryl phosphate synthase from Staphylococcus epidermidis (strain ATCC 35984 / DSM 28319 / BCRC 17069 / CCUG 31568 / BM 3577 / RP62A).